Consider the following 292-residue polypeptide: tRNA-cytidine(32) 2-sulfurtransferase (292 aa).

A PP-loop motif motif is present at residues 53-58 (SGGKDS). [4Fe-4S] cluster-binding residues include Cys-128, Cys-131, and Cys-219.

It belongs to the TtcA family. In terms of assembly, homodimer. The cofactor is Mg(2+). It depends on [4Fe-4S] cluster as a cofactor.

Its subcellular location is the cytoplasm. The catalysed reaction is cytidine(32) in tRNA + S-sulfanyl-L-cysteinyl-[cysteine desulfurase] + AH2 + ATP = 2-thiocytidine(32) in tRNA + L-cysteinyl-[cysteine desulfurase] + A + AMP + diphosphate + H(+). It functions in the pathway tRNA modification. Its function is as follows. Catalyzes the ATP-dependent 2-thiolation of cytidine in position 32 of tRNA, to form 2-thiocytidine (s(2)C32). The sulfur atoms are provided by the cysteine/cysteine desulfurase (IscS) system. In Cereibacter sphaeroides (strain ATCC 17029 / ATH 2.4.9) (Rhodobacter sphaeroides), this protein is tRNA-cytidine(32) 2-sulfurtransferase.